A 393-amino-acid polypeptide reads, in one-letter code: Acyl-homoserine-lactone synthase OpaM (393 aa).

The protein belongs to the LuxM / VanM family.

The catalysed reaction is a fatty acyl-[ACP] + S-adenosyl-L-methionine = an N-acyl-L-homoserine lactone + S-methyl-5'-thioadenosine + holo-[ACP] + H(+). This Vibrio parahaemolyticus serotype O3:K6 (strain RIMD 2210633) protein is Acyl-homoserine-lactone synthase OpaM (opaM).